The following is a 274-amino-acid chain: Thymidylate synthase (274 aa).

R21 provides a ligand contact to dUMP. A (6R)-5,10-methylene-5,6,7,8-tetrahydrofolate-binding site is contributed by H51. 123-124 (RR) lines the dUMP pocket. The active-site Nucleophile is the C156. DUMP-binding positions include 176 to 179 (RSAD), N187, and 217 to 219 (HIY). D179 provides a ligand contact to (6R)-5,10-methylene-5,6,7,8-tetrahydrofolate. A273 contacts (6R)-5,10-methylene-5,6,7,8-tetrahydrofolate.

This sequence belongs to the thymidylate synthase family. Bacterial-type ThyA subfamily. As to quaternary structure, homodimer.

It is found in the cytoplasm. The enzyme catalyses dUMP + (6R)-5,10-methylene-5,6,7,8-tetrahydrofolate = 7,8-dihydrofolate + dTMP. Its pathway is pyrimidine metabolism; dTTP biosynthesis. Functionally, catalyzes the reductive methylation of 2'-deoxyuridine-5'-monophosphate (dUMP) to 2'-deoxythymidine-5'-monophosphate (dTMP) while utilizing 5,10-methylenetetrahydrofolate (mTHF) as the methyl donor and reductant in the reaction, yielding dihydrofolate (DHF) as a by-product. This enzymatic reaction provides an intracellular de novo source of dTMP, an essential precursor for DNA biosynthesis. The protein is Thymidylate synthase of Christiangramia forsetii (strain DSM 17595 / CGMCC 1.15422 / KT0803) (Gramella forsetii).